A 246-amino-acid chain; its full sequence is Proteasome subunit alpha type-6 (246 aa).

Belongs to the peptidase T1A family. As to quaternary structure, the 26S proteasome consists of a 20S proteasome core and two 19S regulatory subunits. The 20S proteasome core is composed of 28 subunits that are arranged in four stacked rings, resulting in a barrel-shaped structure. The two end rings are each formed by seven alpha subunits, and the two central rings are each formed by seven beta subunits. The catalytic chamber with the active sites is on the inside of the barrel.

It localises to the cytoplasm. The protein localises to the nucleus. Functionally, the proteasome is a multicatalytic proteinase complex which is characterized by its ability to cleave peptides with Arg, Phe, Tyr, Leu, and Glu adjacent to the leaving group at neutral or slightly basic pH. The proteasome has an ATP-dependent proteolytic activity. This Nicotiana tabacum (Common tobacco) protein is Proteasome subunit alpha type-6 (PAA1).